The sequence spans 349 residues: Protein O-mannose kinase (349 aa).

Residues 1–19 (MGQQHGARNGLTHRELPRG) are Cytoplasmic-facing. A helical; Signal-anchor for type II membrane protein transmembrane segment spans residues 20–42 (MGLLLAMALMNVVLYVCLDHLFI). Topologically, residues 43 to 349 (SPGRATEDPR…TVMSQTKEML (307 aa)) are lumenal. Residues Asn66, Asn164, and Asn219 are each glycosylated (N-linked (GlcNAc...) asparagine). In terms of domain architecture, Protein kinase spans 80 to 349 (VRQLKLVGEG…TVMSQTKEML (270 aa)).

It belongs to the protein kinase superfamily. Ser/Thr protein kinase family. STKL subfamily.

The protein resides in the endoplasmic reticulum membrane. It carries out the reaction 3-O-[beta-D-GalNAc-(1-&gt;3)-beta-D-GlcNAc-(1-&gt;4)-alpha-D-Man]-L-Thr-[protein] + ATP = 3-O-[beta-D-GalNAc-(1-&gt;3)-beta-D-GlcNAc-(1-&gt;4)-(O-6-P-alpha-D-Man)]-Thr-[protein] + ADP + H(+). In terms of biological role, protein O-mannose kinase that specifically mediates phosphorylation at the 6-position of an O-mannose of the trisaccharide (N-acetylgalactosamine (GalNAc)-beta-1,3-N-acetylglucosamine (GlcNAc)-beta-1,4-mannose) to generate phosphorylated O-mannosyl trisaccharide (N-acetylgalactosamine-beta-1,3-N-acetylglucosamine-beta-1,4-(phosphate-6-)mannose). Phosphorylated O-mannosyl trisaccharide is a carbohydrate structure present in alpha-dystroglycan (DAG1), which is required for binding laminin G-like domain-containing extracellular proteins with high affinity. Only shows kinase activity when the GalNAc-beta-3-GlcNAc-beta-terminus is linked to the 4-position of O-mannose, suggesting that this disaccharide serves as the substrate recognition motif. The protein is Protein O-mannose kinase (Pomk) of Rattus norvegicus (Rat).